The primary structure comprises 333 residues: Squamosa promoter-binding-like protein 8 (333 aa).

The segment at 1–28 (MLDYEWDNPSSIVLSGDERNPDSDPTRS) is disordered. Residues 16–25 (GDERNPDSDP) are compositionally biased toward basic and acidic residues. The interval 179–269 (MANSLSTPRC…RKCHQSASAT (91 aa)) is sufficient and necessary for DNA binding. An SBP-type zinc finger spans residues 185–262 (TPRCQAEGCN…ADHNRRRRKC (78 aa)). Residues C188, C193, C210, H213, C229, C232, H236, and C248 each contribute to the Zn(2+) site. Positions 245 to 261 (KRSCRKRLADHNRRRRK) match the Bipartite nuclear localization signal motif. Disordered regions lie at residues 254 to 303 (DHNR…TISL) and 314 to 333 (TASS…FSSG). The segment covering 264 to 284 (QSASATQDTGTGKTTPKSPND) has biased composition (polar residues). The span at 289–299 (ASSSPSSNAPP) shows a compositional bias: low complexity.

Zn(2+) is required as a cofactor. As to expression, expressed in shoot apical region and early floral tissues. Transcripts levels increase in developing pollen sacs, and decrease in later stage of anther development. Strongly expressed in the placental region of the carpels.

Its subcellular location is the nucleus. The protein resides in the cytoplasm. Functionally, trans-acting factor that binds specifically to the consensus nucleotide sequence 5'-TNCGTACAA-3'. Binds specifically to the 5'-GTAC-3' core sequence. Involved in development and floral organogenesis. Required for ovule differentiation, pollen production, filament elongation, seed formation and siliques elongation. Also seems to play a role in the formation of trichomes on sepals. May positively modulate gibberellin (GA) signaling in flower. In Arabidopsis thaliana (Mouse-ear cress), this protein is Squamosa promoter-binding-like protein 8 (SPL8).